The sequence spans 125 residues: Fluoride-specific ion channel FluC (125 aa).

The next 4 helical transmembrane spans lie at 5 to 25 (FVFI…LAGF), 33 to 53 (FFPF…GFLW), 69 to 89 (FVLV…LETG), and 101 to 121 (IVNL…GIVL). 2 residues coordinate Na(+): G76 and T79.

Belongs to the fluoride channel Fluc/FEX (TC 1.A.43) family.

It is found in the cell inner membrane. It catalyses the reaction fluoride(in) = fluoride(out). With respect to regulation, na(+) is not transported, but it plays an essential structural role and its presence is essential for fluoride channel function. Its function is as follows. Fluoride-specific ion channel. Important for reducing fluoride concentration in the cell, thus reducing its toxicity. The polypeptide is Fluoride-specific ion channel FluC (Desulforapulum autotrophicum (strain ATCC 43914 / DSM 3382 / VKM B-1955 / HRM2) (Desulfobacterium autotrophicum)).